Consider the following 69-residue polypeptide: Pleurain-A3 (69 aa).

A signal peptide spans 1–22 (MFTLKKTLLLLFFLGTISISLC). Residues 23 to 43 (KQARDADEDDGRKMTEEEVKR) constitute a propeptide that is removed on maturation. The cysteines at positions 63 and 69 are disulfide-linked.

This sequence belongs to the frog skin active peptide (FSAP) family. Pleurain subfamily. Expressed by the skin glands.

The protein resides in the secreted. Functionally, antimicrobial peptide. Has activity against Gram-positive and -negative bacteria, and fungi. Has little hemolytic activity on red blood cells. The polypeptide is Pleurain-A3 (Nidirana pleuraden (Yunnan pond frog)).